Here is a 330-residue protein sequence, read N- to C-terminus: Ferredoxin--NADP reductase (330 aa).

FAD is bound by residues Glu-34, Gln-42, Tyr-47, Val-87, Phe-121, Asp-285, and Ser-325.

It belongs to the ferredoxin--NADP reductase type 2 family. As to quaternary structure, homodimer. FAD is required as a cofactor.

It carries out the reaction 2 reduced [2Fe-2S]-[ferredoxin] + NADP(+) + H(+) = 2 oxidized [2Fe-2S]-[ferredoxin] + NADPH. The polypeptide is Ferredoxin--NADP reductase (Limosilactobacillus fermentum (strain NBRC 3956 / LMG 18251) (Lactobacillus fermentum)).